Consider the following 386-residue polypeptide: Threonine--tRNA ligase editing subunit (386 aa).

Belongs to the class-II aminoacyl-tRNA synthetase family. Archaea-specific ThrRS editing domain subfamily. Probably interacts with its catalytic subunit (AC Q97VW8); a subunit fusion (in the order edit-catalytic) is fully functional.

Its subcellular location is the cytoplasm. In terms of biological role, freestanding tRNA editing subunit of threonine--tRNA ligase, the catalytic subunit is AC Q97VW8. Deacylates (edits) mischarged L-seryl-tRNA(Thr) in trans, removing L-serine, has no aminoacylation activity. In vitro when both subunits are present, or if the 2 subunits are fused, L-seryl-tRNA(Thr) is no longer produced. Has no activity on correctly acylated L-seryl-tRNA(Ser) or L-threonyl-tRNA(Thr). Editing is probably catalyzed by the 2'-OH of A76 of tRNA(Thr). This is Threonine--tRNA ligase editing subunit from Saccharolobus solfataricus (strain ATCC 35092 / DSM 1617 / JCM 11322 / P2) (Sulfolobus solfataricus).